A 178-amino-acid polypeptide reads, in one-letter code: dCTP deaminase, dUMP-forming (178 aa).

DCTP is bound by residues 96-101, Asp-113, 121-123, Gln-142, Tyr-156, and Gln-163; these read RSSLGR and TLE. Glu-123 acts as the Proton donor/acceptor in catalysis.

The protein belongs to the dCTP deaminase family. As to quaternary structure, homotrimer.

It catalyses the reaction dCTP + 2 H2O = dUMP + NH4(+) + diphosphate. It participates in pyrimidine metabolism; dUMP biosynthesis; dUMP from dCTP: step 1/1. Its function is as follows. Bifunctional enzyme that catalyzes both the deamination of dCTP to dUTP and the hydrolysis of dUTP to dUMP without releasing the toxic dUTP intermediate. The chain is dCTP deaminase, dUMP-forming from Acetivibrio thermocellus (strain ATCC 27405 / DSM 1237 / JCM 9322 / NBRC 103400 / NCIMB 10682 / NRRL B-4536 / VPI 7372) (Clostridium thermocellum).